Consider the following 306-residue polypeptide: MELKDYYAIMGVKPTDDLKTIKTAYRRLARKYHPDVSKEPDAEARFKEVAEAWEVLSDEQRRAEYDQMWQHRNDPQFNRQFHHGDGQSFNAEDFDDIFSSIFGQHARQARQRPATRGHDIEIEVPVFLEETLSEHKRTISYNLPVYNAFGMVEQEIPKTLNVKIPAGVGNGQRIRLKGQGTPGENGGPNGDLWLIIHIAPHPLFDVVGQDLEIVVPVAPWEAALGGKVTVPTLKESILLTIPAGSQAGQRLRVKGKGLVSKKHTGDLYAVLKIVMPPKPDENATALWQQLADAQSSFDPRKDWGKA.

Residues 5 to 69 (DYYAIMGVKP…QRRAEYDQMW (65 aa)) form the J domain.

It localises to the cytoplasm. The protein localises to the nucleoid. DNA-binding protein that preferentially recognizes a curved DNA sequence. It is probably a functional analog of DnaJ; displays overlapping activities with DnaJ, but functions under different conditions, probably acting as a molecular chaperone in an adaptive response to environmental stresses other than heat shock. Lacks autonomous chaperone activity; binds native substrates and targets them for recognition by DnaK. Its activity is inhibited by the binding of CbpM. The chain is Curved DNA-binding protein from Escherichia fergusonii (strain ATCC 35469 / DSM 13698 / CCUG 18766 / IAM 14443 / JCM 21226 / LMG 7866 / NBRC 102419 / NCTC 12128 / CDC 0568-73).